We begin with the raw amino-acid sequence, 604 residues long: Aspartate--tRNA(Asp/Asn) ligase (604 aa).

An L-aspartate-binding site is contributed by E168. Residues 192–195 (QLFK) are aspartate. R214 is a binding site for L-aspartate. ATP is bound by residues 214–216 (RDE) and Q223. H446 provides a ligand contact to L-aspartate. E480 is an ATP binding site. Residue R487 participates in L-aspartate binding. 532–535 (GWDR) serves as a coordination point for ATP. A disordered region spans residues 575 to 604 (LEAGVDARPKPEARAQAGTAGPAAPVADPT). Residues 577 to 587 (AGVDARPKPEA) show a composition bias toward basic and acidic residues. The span at 588–604 (RAQAGTAGPAAPVADPT) shows a compositional bias: low complexity.

It belongs to the class-II aminoacyl-tRNA synthetase family. Type 1 subfamily. Homodimer.

It localises to the cytoplasm. The catalysed reaction is tRNA(Asx) + L-aspartate + ATP = L-aspartyl-tRNA(Asx) + AMP + diphosphate. Its function is as follows. Aspartyl-tRNA synthetase with relaxed tRNA specificity since it is able to aspartylate not only its cognate tRNA(Asp) but also tRNA(Asn). Reaction proceeds in two steps: L-aspartate is first activated by ATP to form Asp-AMP and then transferred to the acceptor end of tRNA(Asp/Asn). This is Aspartate--tRNA(Asp/Asn) ligase from Salinispora arenicola (strain CNS-205).